Here is a 148-residue protein sequence, read N- to C-terminus: MLRLLSKRLYCKIATKSNEKATKLDFKQLTHPTKVPQTPVDAEFPDTSSSEIQIDTKTIQLLERLSLVDLDSERALATLKSSIQFANKIAHINTEHVRPLYTVLEQQQLQLRNDQVTEGDCRAEVLRNAKVTDEDYYVSPPGNIPLEQ.

The protein belongs to the GatC family. As to quaternary structure, subunit of the heterotrimeric GatCAB amidotransferase (AdT) complex, composed of A, B and C subunits.

It localises to the mitochondrion. The catalysed reaction is L-glutamyl-tRNA(Gln) + L-glutamine + ATP + H2O = L-glutaminyl-tRNA(Gln) + L-glutamate + ADP + phosphate + H(+). Functionally, allows the formation of correctly charged Gln-tRNA(Gln) through the transamidation of misacylated Glu-tRNA(Gln) in the mitochondria. The reaction takes place in the presence of glutamine and ATP through an activated gamma-phospho-Glu-tRNA(Gln). The chain is Glutamyl-tRNA(Gln) amidotransferase subunit C, mitochondrial from Drosophila yakuba (Fruit fly).